Reading from the N-terminus, the 377-residue chain is Subtilisin-like protease CPC735_012930 (377 aa).

The signal sequence occupies residues methionine 1–alanine 20. The propeptide occupies glycine 21–threonine 118. An Inhibitor I9 domain is found at serine 36 to methionine 114. Positions serine 128–phenylalanine 377 constitute a Peptidase S8 domain. Active-site charge relay system residues include aspartate 160 and histidine 191. N-linked (GlcNAc...) asparagine glycosylation occurs at asparagine 252. Serine 323 functions as the Charge relay system in the catalytic mechanism. 2 N-linked (GlcNAc...) asparagine glycosylation sites follow: asparagine 364 and asparagine 373.

This sequence belongs to the peptidase S8 family.

It is found in the secreted. In terms of biological role, secreted subtilisin-like serine protease with keratinolytic activity that contributes to pathogenicity. This is Subtilisin-like protease CPC735_012930 from Coccidioides posadasii (strain C735) (Valley fever fungus).